A 185-amino-acid polypeptide reads, in one-letter code: Elongation factor P (185 aa).

Belongs to the elongation factor P family.

It is found in the cytoplasm. It functions in the pathway protein biosynthesis; polypeptide chain elongation. In terms of biological role, involved in peptide bond synthesis. Stimulates efficient translation and peptide-bond synthesis on native or reconstituted 70S ribosomes in vitro. Probably functions indirectly by altering the affinity of the ribosome for aminoacyl-tRNA, thus increasing their reactivity as acceptors for peptidyl transferase. The chain is Elongation factor P from Streptococcus equi subsp. zooepidemicus (strain MGCS10565).